A 533-amino-acid polypeptide reads, in one-letter code: Neuropilin and tolloid-like protein 1 (533 aa).

Residues 1 to 22 form the signal peptide; that stretch reads MIYGRSLFHIIASLIILHSSGA. Residues 23–344 are Extracellular-facing; sequence TKKGTEKQIT…LDQLTNTSGT (322 aa). Intrachain disulfides connect Cys41/Cys68, Cys96/Cys118, Cys172/Cys202, Cys229/Cys251, Cys292/Cys304, Cys299/Cys317, and Cys311/Cys326. CUB domains follow at residues 41–155 and 172–287; these read CGTW…YNFT and CEFE…FTSF. Positions 291-327 constitute an LDL-receptor class A domain; that stretch reads PCEGNTFFCHSNMCINNTLVCNGLQNCVYPWDENHCK. A glycan (N-linked (GlcNAc...) asparagine) is linked at Asn306. Residue Asn340 is glycosylated (N-linked (GlcNAc...) asparagine). A helical transmembrane segment spans residues 345 to 365; sequence VIGVTSCIVIILIIVSVIVQI. Residues 366–533 are Cytoplasmic-facing; the sequence is KQPRKKYVQR…HESEYNTTRV (168 aa). The residue at position 417 (Tyr417) is a Phosphotyrosine. Positions 531 to 533 match the PDZ-binding motif; it reads TRV.

In terms of assembly, interacts with PLZ domains of DLG2, DLG3 and DLG4 via its C-terminal TRV domain. Interacts with GRIN2A and GRIN2B via its CUB domains. In terms of tissue distribution, expressed only in brain. Present throughout the central nervous system. Highly expressed in the hippocampal CA3 region, olfactory bulb and tubercle, caudate putamen, and neocortex in the adult brain.

The protein resides in the membrane. It localises to the postsynaptic density membrane. Functionally, involved in the development and/or maintenance of neuronal circuitry. Accessory subunit of the neuronal N-methyl-D-aspartate receptor (NMDAR) critical for maintaining the abundance of GRIN2A-containing NMDARs in the postsynaptic density. Regulates long-term NMDA receptor-dependent synaptic plasticity and cognition, at least in the context of spatial learning and memory. The polypeptide is Neuropilin and tolloid-like protein 1 (Neto1) (Mus musculus (Mouse)).